Consider the following 247-residue polypeptide: Coproheme decarboxylase (247 aa).

Fe-coproporphyrin III-binding positions include Arg129, Tyr143 to Lys147, His170, Gln183, and Ser221. The active site involves Tyr143.

Belongs to the ChdC family. Type 1 subfamily. Requires Fe-coproporphyrin III as cofactor.

The catalysed reaction is Fe-coproporphyrin III + 2 H2O2 + 2 H(+) = heme b + 2 CO2 + 4 H2O. It carries out the reaction Fe-coproporphyrin III + H2O2 + H(+) = harderoheme III + CO2 + 2 H2O. The enzyme catalyses harderoheme III + H2O2 + H(+) = heme b + CO2 + 2 H2O. It functions in the pathway porphyrin-containing compound metabolism; protoheme biosynthesis. In terms of biological role, involved in coproporphyrin-dependent heme b biosynthesis. Catalyzes the decarboxylation of Fe-coproporphyrin III (coproheme) to heme b (protoheme IX), the last step of the pathway. The reaction occurs in a stepwise manner with a three-propionate intermediate. This Bacillus anthracis protein is Coproheme decarboxylase.